Consider the following 106-residue polypeptide: YcgL domain-containing protein PsycPRwf_1721 (106 aa).

Residues 1–94 form the YcgL domain; it reads MHCDIYKFPK…PSDVLLAQAQ (94 aa).

The polypeptide is YcgL domain-containing protein PsycPRwf_1721 (Psychrobacter sp. (strain PRwf-1)).